The following is a 107-amino-acid chain: MQFSTTPTLEGQSIVEYCGVVTGEAILGANIFRDFFAGIRDIVGGRSGAYEKELRKAREIAFQELGEQAKALGADAVVGIDIDYETVGKDGSMLMVSVSGTAVKTRR.

The protein belongs to the UPF0145 family.

This Salmonella gallinarum (strain 287/91 / NCTC 13346) protein is UPF0145 protein YbjQ.